Reading from the N-terminus, the 603-residue chain is MLVMSHVLAAVAWPYANGPRHIGHVSGFGVPSDVFARYMRMAGHDVLMVSGTDEHGTPIQVQADAEGVTPRELADRYNRVIVADLHGLGLTYDLFTRTTTGNHYAVVQELFEGMYRNGYIVSKTTMGAISPSTGRTLPDRYIEGTCPICGYESARGDQCDSCGNQLDPIDLRNPKSKINGETPKFVETEHFFLDLPALAGVLGQWLDTREGWRPNVLRFSKNLLDDLQPRAITRDLEWGVPIPLDGWRERGDKRIYVWFDAVIGYLSASIEWARRSGDPQAWRRWWSADGPGKDAPSHYFMGKDNIVFHSVIWPALLAGYSGEGSHDGQPGELGRLNLPTEVVSSEFLTMEGRKFSSSRRVVIYVRDFLERYDADALRYFIAVAGPESNDTDFTWAEFLRRNNDELVAGWGNLVNRSISMAAKNFGAIPPVDPAGLTEADETLLAVARAGFDTVGELIGRHRQKQAIGEAMKVVAEANRYLSEQAPWKLKGEADRPRMGTVLHVALQVVSDANTLLTPFLPHSAQKIHQLLGGTGVHAPMPVIEEVEDLDGGPAYPVLTGDYTVGARWESVPLAVGRALDPPKPVFRKLDPSIVDEELARLAG.

A 'HIGH' region motif is present at residues 14–24; the sequence is PYANGPRHIGH. Residues Cys146, Cys149, Cys159, and Cys162 each coordinate Zn(2+). Residues 354–358 carry the 'KMSKS' region motif; it reads KFSSS. ATP is bound at residue Ser357.

Belongs to the class-I aminoacyl-tRNA synthetase family. MetG type 1 subfamily. In terms of assembly, monomer. Zn(2+) is required as a cofactor.

The protein localises to the cytoplasm. It catalyses the reaction tRNA(Met) + L-methionine + ATP = L-methionyl-tRNA(Met) + AMP + diphosphate. In terms of biological role, is required not only for elongation of protein synthesis but also for the initiation of all mRNA translation through initiator tRNA(fMet) aminoacylation. In Salinispora tropica (strain ATCC BAA-916 / DSM 44818 / JCM 13857 / NBRC 105044 / CNB-440), this protein is Methionine--tRNA ligase.